The following is a 212-amino-acid chain: Methylthioribulose-1-phosphate dehydratase (212 aa).

The Zn(2+) site is built by H97 and H99.

Belongs to the aldolase class II family. MtnB subfamily. As to quaternary structure, homotetramer. Zn(2+) serves as cofactor.

It carries out the reaction 5-(methylsulfanyl)-D-ribulose 1-phosphate = 5-methylsulfanyl-2,3-dioxopentyl phosphate + H2O. Its pathway is amino-acid biosynthesis; L-methionine biosynthesis via salvage pathway; L-methionine from S-methyl-5-thio-alpha-D-ribose 1-phosphate: step 2/6. In terms of biological role, catalyzes the dehydration of methylthioribulose-1-phosphate (MTRu-1-P) into 2,3-diketo-5-methylthiopentyl-1-phosphate (DK-MTP-1-P). The chain is Methylthioribulose-1-phosphate dehydratase from Bacillus cereus (strain B4264).